We begin with the raw amino-acid sequence, 272 residues long: 2-succinyl-6-hydroxy-2,4-cyclohexadiene-1-carboxylate synthase (272 aa).

The protein belongs to the AB hydrolase superfamily. MenH family. Monomer.

The catalysed reaction is 5-enolpyruvoyl-6-hydroxy-2-succinyl-cyclohex-3-ene-1-carboxylate = (1R,6R)-6-hydroxy-2-succinyl-cyclohexa-2,4-diene-1-carboxylate + pyruvate. Its pathway is quinol/quinone metabolism; 1,4-dihydroxy-2-naphthoate biosynthesis; 1,4-dihydroxy-2-naphthoate from chorismate: step 3/7. It participates in quinol/quinone metabolism; menaquinone biosynthesis. In terms of biological role, catalyzes a proton abstraction reaction that results in 2,5-elimination of pyruvate from 2-succinyl-5-enolpyruvyl-6-hydroxy-3-cyclohexene-1-carboxylate (SEPHCHC) and the formation of 2-succinyl-6-hydroxy-2,4-cyclohexadiene-1-carboxylate (SHCHC). This chain is 2-succinyl-6-hydroxy-2,4-cyclohexadiene-1-carboxylate synthase, found in Yersinia pseudotuberculosis serotype IB (strain PB1/+).